The chain runs to 119 residues: Ribonuclease P protein component (119 aa).

It belongs to the RnpA family. In terms of assembly, consists of a catalytic RNA component (M1 or rnpB) and a protein subunit.

The catalysed reaction is Endonucleolytic cleavage of RNA, removing 5'-extranucleotides from tRNA precursor.. In terms of biological role, RNaseP catalyzes the removal of the 5'-leader sequence from pre-tRNA to produce the mature 5'-terminus. It can also cleave other RNA substrates such as 4.5S RNA. The protein component plays an auxiliary but essential role in vivo by binding to the 5'-leader sequence and broadening the substrate specificity of the ribozyme. This chain is Ribonuclease P protein component, found in Photorhabdus laumondii subsp. laumondii (strain DSM 15139 / CIP 105565 / TT01) (Photorhabdus luminescens subsp. laumondii).